Here is an 888-residue protein sequence, read N- to C-terminus: Rab GTPase-activating protein eat-17 (888 aa).

Positions 41-60 (RSNSNSTSSPRNSPSQLSPP) are enriched in low complexity. Disordered regions lie at residues 41 to 87 (RSNS…CETG) and 104 to 135 (LNKS…HSPE). A compositionally biased stretch (polar residues) spans 114–123 (SVASKKTGSS). Positions 124 to 133 (ESRKGAREHS) are enriched in basic and acidic residues. Positions 173 to 357 (GIPQHFRMIA…RIMDCFLVEG (185 aa)) constitute a Rab-GAP TBC domain. Residues 631–654 (ASIEKESTSEAHSTQQQPSPPLTS) form a disordered region. Residues 694–770 (EADTLAELKE…ESEFNEGRIN (77 aa)) adopt a coiled-coil conformation. The tract at residues 854-888 (LAEEGSATETDELRPKELNDGNDTTDSGVQLSDSH) is disordered. A compositionally biased stretch (polar residues) spans 874–888 (GNDTTDSGVQLSDSH).

In terms of assembly, may interact with rab-6.2 (in GTP-bound form). Highly expressed in the terminal bulb muscles, pharyngeal muscle, in intestine and vulva.

Functionally, rab GTPase activating protein for the small GTPase rab-6.2. Required for grinder formation, which is the feeding organ that breaks down food. The sequence is that of Rab GTPase-activating protein eat-17 from Caenorhabditis elegans.